Here is a 230-residue protein sequence, read N- to C-terminus: Ureidoacrylate amidohydrolase RutB (230 aa).

Asp24 (proton acceptor) is an active-site residue. Lys133 is a catalytic residue. Residue Cys166 is the Nucleophile of the active site.

The protein belongs to the isochorismatase family. RutB subfamily.

It carries out the reaction (Z)-3-ureidoacrylate + H2O + H(+) = (Z)-3-aminoacrylate + NH4(+) + CO2. The catalysed reaction is (Z)-3-ureidoacrylate + H2O = (Z)-3-aminoacrylate + carbamate + H(+). It catalyses the reaction (Z)-2-methylureidoacrylate + H2O + H(+) = (Z)-2-methylaminoacrylate + NH4(+) + CO2. Hydrolyzes ureidoacrylate to form aminoacrylate and carbamate. The carbamate hydrolyzes spontaneously, thereby releasing one of the nitrogen atoms of the pyrimidine ring as ammonia and one of its carbon atoms as CO2. This is Ureidoacrylate amidohydrolase RutB from Escherichia coli O127:H6 (strain E2348/69 / EPEC).